The primary structure comprises 79 residues: Small ribosomal subunit protein bS18 (79 aa).

Belongs to the bacterial ribosomal protein bS18 family. As to quaternary structure, part of the 30S ribosomal subunit. Forms a tight heterodimer with protein bS6.

Its function is as follows. Binds as a heterodimer with protein bS6 to the central domain of the 16S rRNA, where it helps stabilize the platform of the 30S subunit. This is Small ribosomal subunit protein bS18 from Enterococcus faecalis (strain ATCC 700802 / V583).